Here is a 1043-residue protein sequence, read N- to C-terminus: Protein SLOW WALKER 2 (1043 aa).

4 disordered regions span residues 32–113 (SALP…SIDD), 444–469 (QGAD…VSTD), 632–737 (DIEH…GGYD), and 861–1043 (SKKK…KASE). A Nuclear localization signal 1 motif is present at residues 44-51 (FRKPAKSK). Residues 47–59 (PAKSKTQKRKKPK) show a composition bias toward basic residues. Basic and acidic residues-rich tracts occupy residues 80 to 95 (EKGK…KDAP) and 444 to 466 (QGAD…KQEV). The Nuclear localization signal 2 motif lies at 441-448 (NRKQGADD). Positions 632–645 (DIEHFEDVIEGDDV) are enriched in acidic residues. The span at 646–673 (DPNKKAENDENVVEVDHDGVEKSSRDGD) shows a compositional bias: basic and acidic residues. Composition is skewed to acidic residues over residues 688–699 (DEEDDNASDDSE) and 872–983 (EEAA…DSDG). Positions 988-1000 (SKKKKKEKRKRKS) are enriched in basic residues. Residues 1006–1031 (EEYKHLIDQDEKEDSKTKRKATSEPT) show a composition bias toward basic and acidic residues. Residues 1022–1029 (TKRKATSE) carry the Nuclear localization signal 3 motif. Over residues 1032 to 1043 (KKKKKKKSKASE) the composition is skewed to basic residues.

Belongs to the CBF/MAK21 family. As to quaternary structure, interacts with RBL in both the nucleolus and nucleoplasm. Binds to NOC2. In terms of tissue distribution, mainly expressed in actively dividing tissues (e.g. root tips, lateral root primordia, shoot apices, young leaves, inflorescences and pollen grains) through the plant, including roots, stems, leaves, inflorescences, siliques and seedlings, and in gametophytes.

It is found in the nucleus. The protein localises to the nucleolus. Together with NOC2, probably involved in pre-ribosome export from the nucleus to the cytoplasm. Required for coordinated cell cycle progression during female gametophyte and pollen development. The polypeptide is Protein SLOW WALKER 2 (Arabidopsis thaliana (Mouse-ear cress)).